We begin with the raw amino-acid sequence, 1149 residues long: Translocase of chloroplast 126, chloroplastic (1149 aa).

Disordered regions lie at residues 1 to 206 (MDAL…GKEL), 219 to 292 (NMPN…RELT), and 315 to 431 (LELK…VNPS). Residues 131-142 (LYYDDYGDDGEV) show a composition bias toward acidic residues. The segment covering 152-168 (TSSSSSSSSSECSSSAS) has biased composition (low complexity). Acidic residues-rich tracts occupy residues 271 to 280 (YDQEGEDADS) and 335 to 357 (GESD…DEHE). A compositionally biased stretch (polar residues) spans 406-429 (TAATDTQSSNAASSTQVAGTTDVN). Positions 514 to 743 (DFACTILVLG…KLQDTAAPGR (230 aa)) constitute an AIG1-type G domain. The tract at residues 523-530 (GKTGVGKS) is G1. 526 to 531 (GVGKSA) is a binding site for GTP. Mg(2+) is bound at residue Ser530. The segment at 550-554 (STTNV) is G2. Residues 570–573 (DTPG) form a G3 region. Positions 642 to 645 (THAS) are G4. GTP is bound by residues His643 and 691-692 (EN). Residues 691–693 (ENH) form a G5 region. 2 disordered regions span residues 769-800 (KLPD…LPPF) and 833-869 (KQHR…DEAG). Acidic residues predominate over residues 773–796 (EQLDESDESDDDEEDEEEGDEYDD). Basic and acidic residues-rich tracts occupy residues 833–842 (KQHREQLQRR) and 852–862 (MRKEGLSHPAD). The helical transmembrane segment at 1123-1144 (MVLIGIVPILRSLINCRFGFGG) threads the bilayer.

The protein belongs to the TRAFAC class TrmE-Era-EngA-EngB-Septin-like GTPase superfamily. AIG1/Toc34/Toc159-like paraseptin GTPase family. TOC159 subfamily. In terms of assembly, part of the TOC core complex. It depends on Mg(2+) as a cofactor.

It is found in the plastid. The protein resides in the chloroplast outer membrane. GTPase involved in protein precursor import into chloroplasts. Seems to recognize chloroplast-destined precursor proteins and regulate their presentation to the translocation channel through GTP hydrolysis. Probably specialized in the import of nuclear encoded non-photosynthetic preproteins from the cytoplasm to the chloroplast. The sequence is that of Translocase of chloroplast 126, chloroplastic from Physcomitrium patens (Spreading-leaved earth moss).